Reading from the N-terminus, the 289-residue chain is Bis(5'-nucleosyl)-tetraphosphatase, symmetrical (289 aa).

The protein belongs to the Ap4A hydrolase family.

The enzyme catalyses P(1),P(4)-bis(5'-adenosyl) tetraphosphate + H2O = 2 ADP + 2 H(+). Hydrolyzes diadenosine 5',5'''-P1,P4-tetraphosphate to yield ADP. This chain is Bis(5'-nucleosyl)-tetraphosphatase, symmetrical, found in Yersinia pseudotuberculosis serotype IB (strain PB1/+).